The chain runs to 608 residues: Probable methyltransferase PMT3 (608 aa).

Topologically, residues 1-12 (MKGRSDGGQKKR) are cytoplasmic. Residues 13–33 (VIALVCVAAVVLVFVYLFYGS) traverse the membrane as a helical; Signal-anchor for type II membrane protein segment. Residues 34–608 (SDHRASAIEY…LTSESLRDME (575 aa)) are Lumenal-facing. N342 carries an N-linked (GlcNAc...) asparagine glycan.

Belongs to the methyltransferase superfamily.

The protein localises to the golgi apparatus membrane. This is Probable methyltransferase PMT3 from Arabidopsis thaliana (Mouse-ear cress).